The following is a 191-amino-acid chain: Pyridoxal 5'-phosphate synthase subunit PdxT (191 aa).

48 to 50 (GES) contributes to the L-glutamine binding site. Cys79 functions as the Nucleophile in the catalytic mechanism. L-glutamine-binding positions include Arg106 and 134–135 (IR). Active-site charge relay system residues include His170 and Glu172.

This sequence belongs to the glutaminase PdxT/SNO family. As to quaternary structure, in the presence of PdxS, forms a dodecamer of heterodimers. Only shows activity in the heterodimer.

The enzyme catalyses aldehydo-D-ribose 5-phosphate + D-glyceraldehyde 3-phosphate + L-glutamine = pyridoxal 5'-phosphate + L-glutamate + phosphate + 3 H2O + H(+). It catalyses the reaction L-glutamine + H2O = L-glutamate + NH4(+). It participates in cofactor biosynthesis; pyridoxal 5'-phosphate biosynthesis. Catalyzes the hydrolysis of glutamine to glutamate and ammonia as part of the biosynthesis of pyridoxal 5'-phosphate. The resulting ammonia molecule is channeled to the active site of PdxS. The polypeptide is Pyridoxal 5'-phosphate synthase subunit PdxT (Oenococcus oeni (strain ATCC BAA-331 / PSU-1)).